The chain runs to 179 residues: ATP synthase subunit delta (179 aa).

The protein belongs to the ATPase delta chain family. In terms of assembly, F-type ATPases have 2 components, F(1) - the catalytic core - and F(0) - the membrane proton channel. F(1) has five subunits: alpha(3), beta(3), gamma(1), delta(1), epsilon(1). F(0) has three main subunits: a(1), b(2) and c(10-14). The alpha and beta chains form an alternating ring which encloses part of the gamma chain. F(1) is attached to F(0) by a central stalk formed by the gamma and epsilon chains, while a peripheral stalk is formed by the delta and b chains.

The protein resides in the cell inner membrane. Its function is as follows. F(1)F(0) ATP synthase produces ATP from ADP in the presence of a proton or sodium gradient. F-type ATPases consist of two structural domains, F(1) containing the extramembraneous catalytic core and F(0) containing the membrane proton channel, linked together by a central stalk and a peripheral stalk. During catalysis, ATP synthesis in the catalytic domain of F(1) is coupled via a rotary mechanism of the central stalk subunits to proton translocation. In terms of biological role, this protein is part of the stalk that links CF(0) to CF(1). It either transmits conformational changes from CF(0) to CF(1) or is implicated in proton conduction. The polypeptide is ATP synthase subunit delta (Burkholderia lata (strain ATCC 17760 / DSM 23089 / LMG 22485 / NCIMB 9086 / R18194 / 383)).